A 241-amino-acid chain; its full sequence is Caffeoyl-CoA O-methyltransferase (241 aa).

Lys14 lines the substrate pocket. S-adenosyl-L-methionine contacts are provided by residues Thr58, Glu80, 82–83 (GV), Ser88, Asp106, and Ala135. Substrate is bound at residue Asp158. Asp158 lines the a divalent metal cation pocket. Asp160 provides a ligand contact to S-adenosyl-L-methionine. A divalent metal cation-binding residues include Asp184 and Asn185.

The protein belongs to the class I-like SAM-binding methyltransferase superfamily. Cation-dependent O-methyltransferase family. CCoAMT subfamily. The cofactor is a divalent metal cation.

The enzyme catalyses (E)-caffeoyl-CoA + S-adenosyl-L-methionine = (E)-feruloyl-CoA + S-adenosyl-L-homocysteine + H(+). Its pathway is aromatic compound metabolism; phenylpropanoid biosynthesis. Its function is as follows. Methylates caffeoyl-CoA to feruloyl-CoA and 5-hydroxyferuloyl-CoA to sinapoyl-CoA. Plays a role in the synthesis of feruloylated polysaccharides. Involved in the reinforcement of the plant cell wall. Also involved in the responding to wounding or pathogen challenge by the increased formation of cell wall-bound ferulic acid polymers. This is Caffeoyl-CoA O-methyltransferase from Stellaria longipes (Longstalk starwort).